The sequence spans 429 residues: Glutamate-1-semialdehyde 2,1-aminomutase (429 aa).

Residue lysine 267 is modified to N6-(pyridoxal phosphate)lysine.

This sequence belongs to the class-III pyridoxal-phosphate-dependent aminotransferase family. HemL subfamily. Homodimer. Pyridoxal 5'-phosphate serves as cofactor.

It is found in the cytoplasm. It carries out the reaction (S)-4-amino-5-oxopentanoate = 5-aminolevulinate. Its pathway is porphyrin-containing compound metabolism; protoporphyrin-IX biosynthesis; 5-aminolevulinate from L-glutamyl-tRNA(Glu): step 2/2. The chain is Glutamate-1-semialdehyde 2,1-aminomutase from Xanthomonas axonopodis pv. citri (strain 306).